A 917-amino-acid polypeptide reads, in one-letter code: Major intrinsically disordered Notch2-binding receptor 1 (917 aa).

The Cytoplasmic portion of the chain corresponds to 1-892; it reads MEANQEASLF…AEFRRAKVCK (892 aa). 7 disordered regions span residues 337–367, 388–410, 461–483, 568–588, 652–687, 706–727, and 746–783; these read STYF…WPAK, PSEE…GPDR, SCTS…QHVL, ITNG…NVHH, SEAP…CSDA, TRPS…IASI, and NEEE…LPKQ. Residues 461–480 are compositionally biased toward polar residues; sequence SCTSGQHSSDTSSVGTQTEQ. Residues 576–588 are compositionally biased toward basic and acidic residues; sequence KGDKCNRPENVHH. The residue at position 712 (Ser-712) is a Phosphoserine. Residues 893-913 form a helical membrane-spanning segment; that stretch reads IAALITAAACTVILVIVVPIC. The Extracellular segment spans residues 914–917; it reads TMKS.

This sequence belongs to the MINAR family. In terms of assembly, interacts with NOTCH2; this interaction increases MINAR1 stability. Interacts (via N-terminus) with DEPTOR (via PDZ domain); this interaction may stabilize DEPTOR protein by impairing its ubiquitination. As to expression, expressed in brain and in islets of Langerhans.

The protein localises to the cell membrane. Intrinsically disordered protein which may negatively regulate mTOR signaling pathway by stabilizing the mTOR complex component DEPTOR. Negatively regulates angiogenesis. Negatively regulates cell growth. Negatively regulates neurite outgrowth in hippocampal neurons. The sequence is that of Major intrinsically disordered Notch2-binding receptor 1 (Minar1) from Mus musculus (Mouse).